The primary structure comprises 247 residues: 1-(5-phosphoribosyl)-5-[(5-phosphoribosylamino)methylideneamino] imidazole-4-carboxamide isomerase (247 aa).

D8 (proton acceptor) is an active-site residue. D131 acts as the Proton donor in catalysis.

It belongs to the HisA/HisF family.

It is found in the cytoplasm. It carries out the reaction 1-(5-phospho-beta-D-ribosyl)-5-[(5-phospho-beta-D-ribosylamino)methylideneamino]imidazole-4-carboxamide = 5-[(5-phospho-1-deoxy-D-ribulos-1-ylimino)methylamino]-1-(5-phospho-beta-D-ribosyl)imidazole-4-carboxamide. The protein operates within amino-acid biosynthesis; L-histidine biosynthesis; L-histidine from 5-phospho-alpha-D-ribose 1-diphosphate: step 4/9. The sequence is that of 1-(5-phosphoribosyl)-5-[(5-phosphoribosylamino)methylideneamino] imidazole-4-carboxamide isomerase from Cupriavidus metallidurans (strain ATCC 43123 / DSM 2839 / NBRC 102507 / CH34) (Ralstonia metallidurans).